The chain runs to 86 residues: Large ribosomal subunit protein uL23 (86 aa).

This sequence belongs to the universal ribosomal protein uL23 family. Part of the 50S ribosomal subunit. Contacts protein L29.

In terms of biological role, binds to 23S rRNA. One of the proteins that surrounds the polypeptide exit tunnel on the outside of the ribosome. This chain is Large ribosomal subunit protein uL23, found in Methanococcus maripaludis (strain C6 / ATCC BAA-1332).